A 290-amino-acid chain; its full sequence is MKNTFSRLFGFGDKESEFELQDESHEEIDKKVYEEIQEIPIVNITPNRYQPRTVFDDARIEELALTIRTHGLIQPIVVRQYEDEKYEIIAGERRFRAATKLGWEKVPAIIKNLNDTETASVALIENLQREELTAIEEAVAYQKLIELHNLTQEALAQRLGKGQSTIANKLRLLKLPEEIKNALLEKSITERHARALIPLKNEELQLKVLQEIVEKQLNVKQTEERIAKLLEEAKPKRKAKQKAVSRDTRIAMNTIRQSLQMVADSGLNVNSEEEEFDEYYQITIQIPKKK.

Positions 153-172 (EALAQRLGKGQSTIANKLRL) form a DNA-binding region, H-T-H motif.

It belongs to the ParB family.

It localises to the cytoplasm. The protein localises to the nucleoid. Functionally, effects nucleoid occlusion by binding relatively nonspecifically to DNA and preventing the assembly of the division machinery in the vicinity of the nucleoid, especially under conditions that disturb the cell cycle. It helps to coordinate cell division and chromosome segregation by preventing the formation of the Z ring through the nucleoid, which would cause chromosome breakage. The polypeptide is Nucleoid occlusion protein (Bacillus cereus (strain AH187)).